Reading from the N-terminus, the 170-residue chain is Acetyl-CoA decarbonylase/synthase complex subunit epsilon 1 (170 aa).

The protein belongs to the CdhB family. Heterotetramer of two alpha and two epsilon subunits. The ACDS complex is made up of alpha, epsilon, beta, gamma and delta subunits with a probable stoichiometry of (alpha(2)epsilon(2))(4)-beta(8)-(gamma(1)delta(1))(8).

The protein operates within one-carbon metabolism; methanogenesis from acetate. Part of a complex that catalyzes the reversible cleavage of acetyl-CoA, allowing growth on acetate as sole source of carbon and energy. The alpha-epsilon subcomponent functions as a carbon monoxide dehydrogenase. The precise role of the epsilon subunit is unclear; it may have a stabilizing role within the alpha(2)epsilon(2) component and/or be involved in electron transfer to FAD during a potential FAD-mediated CO oxidation. The chain is Acetyl-CoA decarbonylase/synthase complex subunit epsilon 1 (cdhB1) from Methanosarcina acetivorans (strain ATCC 35395 / DSM 2834 / JCM 12185 / C2A).